We begin with the raw amino-acid sequence, 3242 residues long: tRNA nuclease CdiA (3242 aa).

An N-terminal signal peptide occupies residues 1 to 32 (MHQPPVRFTYRLLSYLISTIIAGQPLLPAVGA). The segment at 36–322 (PQNGAGMDKA…AGGNLSVTGT (287 aa)) is two-partner system transport domain (TPS). An FHA-1 region spans residues 351–1376 (GELTAGQNAM…IVVRTGHLLN (1026 aa)). Residues 1377-1668 (QREGFSATTT…TGQTGISDDW (292 aa)) are receptor-binding domain (RBD). Residues 1668–1852 (WPLPSGNNGY…LSPEDITLHN (185 aa)) are YP domain. The segment at 1853-1913 (GSVISGNNVQ…DLSAIGDISN (61 aa)) is periplasmic FHA-1 repeat (pFR). The segment at 2021–2631 (DNSASSTTSQ…TSKYDSKQTS (611 aa)) is FHA-2. Residues 2075–2091 (RESKNSRNGRSESHESH) show a composition bias toward basic and acidic residues. 3 disordered regions span residues 2075-2094 (RESKNSRNGRSESHESHAAV), 2310-2333 (GSSKTTHDRREAGTTQSQSASTIG), and 2439-2481 (TMAS…NAGN). Polar residues predominate over residues 2322–2333 (GTTQSQSASTIG). A DUF638-CT domain; not toxic when added to the outside of E.coli, does not interfere with F-pilus mediated conjugation, toxic when expressed intracellularly region spans residues 2969 to 3242 (GVDPSKLTED…IESALKGYGI (274 aa)). The segment at 2972-3015 (PSKLTEDQKQTVSTLATLSAGMAGGIASGDVAGAAAGAGAGKNV) is pre-toxin (PT) domain. Residues 3016–3019 (VENN) carry the VENN CT cleavage motif motif. Residues 3016–3097 (VENNALSLVA…KYLSSLHDKY (82 aa)) form a toxin import domain; sufficient to import the tRNA nuclease domain of colicin E5 into E.coli, may bind F-pili region. The tract at residues 3016–3242 (VENNALSLVA…IESALKGYGI (227 aa)) is CT domain; toxic when added to the outside of E.coli and when expressed intracellularly. The tract at residues 3020–3141 (ALSLVARGCA…SENDPKQQNE (122 aa)) is inner membrane translocation domain (IMTD), targets protein to FtsH. The C-terminal effector domain (CT) stretch occupies residues 3020-3242 (ALSLVARGCA…IESALKGYGI (223 aa)). The interval 3098 to 3242 (GSGAASNPNI…IESALKGYGI (145 aa)) is tRNase function, does not interfere with F-pilus mediated conjugation. Residues 3116 to 3146 (KVELGGSGSGTGTPPPSENDPKQQNEKTVDK) are disordered. Positions 3134–3146 (NDPKQQNEKTVDK) are enriched in basic and acidic residues. A coiled-coil region spans residues 3137-3238 (KQQNEKTVDK…AINKIESALK (102 aa)). Residues aspartate 3170, histidine 3193, and glutamate 3196 contribute to the active site.

The protein in the N-terminal section; belongs to the CdiA toxin family. The C-terminal (CT) domain interacts with cognate CdiI but not non-cognate CdiI from D.dadantii strain 3937. CdiA-CT also interacts with CysK; this is blocked upon preincubation with O-acetyl-L-serine. CysK forms a complex with CdiA-CT/CdiI. One CdiA toxin subunit binds to each subunit of the CysK homodimer, and one CdiI immunity protein binds to each toxin subunit; the immune complex is thus a dimer of trimers. The 4 C-terminal residues of CdiA fit into the active site of CysK. Requires a divalent metal cation as cofactor.

It localises to the secreted. Its subcellular location is the target cell membrane. It is found in the target cell. The protein localises to the target cell cytoplasm. Toxic component of a toxin-immunity protein module, which functions as a cellular contact-dependent growth inhibition (CDI) system. CDI modules allow bacteria to communicate with and inhibit the growth of closely related neighboring bacteria in a contact-dependent fashion (target cell counts decrease 100- to 1000-fold). CdiA toxicity is neutralized by its cognate immunity protein CdiI, but not by CdiI from other bacteria. Uses heterotrimeric OmpC and OmpF as target cell outer membrane receptors; receptor function depends on polymorphisms in extracellular loops L4 and L5 of OmpC; interacts with itself and closely related bacteria but also with OmpC from E.cloacae ATCC 13047. Its ability to preferentially bind to 'self' receptors suggests it may also play a role in self-recognition and kin selection. A bamA mutation that decreases its expression about 5-fold is partially resistant to this strain of CdiA, probably due to decreased outer membrane receptor protein assembly. Isolated CdiA-CT is imported in an F-pilus-mediated fashion; CdiA-CT inhibits F-mediated conjugation, probably via its N-terminus (residues 3016-3097), although it is not clear if this is physiologically significant. Gains access to the cytoplasm of target cells by using integral inner membrane protein FtsH. The C-terminal domain (CT) cleaves within tRNA anticodon loops; this activity is inhibited by cognate CdiI. tRNase activity of CdiA-CT is stimulated by CysK, although the extreme C-terminus (residues 3098-3242) has tRNase activity in the absence of CysK. In vivo CDI toxicity requires CysK. CysK stabilizes CdiA-CT, allowing it to bind tRNA substrate; neither CdiA-CT nor CysK bind tRNA alone in vitro. Purified CdiA-CT (residues 3016-3242) inhibits E.coli cell growth when added to cultures alone or in complex with cognate CdiI, growth is inhibited when cognate CdiI is present within the cell but not when a CdiA-CT/CdiI complex is added extracellularly, suggesting CdiA-CT alone but not the CdiA-CT/CdiI complex is imported into the target cell. Its function is as follows. The CdiA protein is thought to be exported from the cell through the central lumen of CdiB, the other half of its two-partner system (TPS). The TPS domain probably remains associated with CdiB while the FHA-1 domain forms an extended filament with the receptor-binding domain (RBD) at its extremity; in the secretion arrested state the C-terminus of the RBD and YP domains form a hairpin-like structure as the FHA-2, PT and CT domains are periplasmic. The YP domain is probably responsible for this arrest at the point where it re-enters the host cell periplasm. Upon binding to a target cell outer membrane receptor (heterotrimeric OmpC-OmpF for this CDI) a signal is transmitted to activate secretion. The filament elongates slightly, the rest of CdiA is secreted and the FHA-2 domain becomes stably associated with the target cell's outer membrane where it facilitates entry of the toxic CT domain into the target cell periplasm. From there the toxic CT domain is cleaved and gains access to the target cell cytoplasm via an inner membrane protein (FtsH for this CDI). In Escherichia coli O6:K15:H31 (strain 536 / UPEC), this protein is tRNA nuclease CdiA.